The following is a 293-amino-acid chain: Small ribosomal subunit biogenesis GTPase RsgA (293 aa).

A CP-type G domain is found at 63–223 (KNQLNRPPIA…VADTPGFSSL (161 aa)). GTP contacts are provided by residues 112–115 (SKTD) and 166–174 (GQSGVGKSS). Residues cysteine 247, cysteine 252, histidine 254, and cysteine 260 each contribute to the Zn(2+) site.

This sequence belongs to the TRAFAC class YlqF/YawG GTPase family. RsgA subfamily. Monomer. Associates with 30S ribosomal subunit, binds 16S rRNA. It depends on Zn(2+) as a cofactor.

Its subcellular location is the cytoplasm. Functionally, one of several proteins that assist in the late maturation steps of the functional core of the 30S ribosomal subunit. Helps release RbfA from mature subunits. May play a role in the assembly of ribosomal proteins into the subunit. Circularly permuted GTPase that catalyzes slow GTP hydrolysis, GTPase activity is stimulated by the 30S ribosomal subunit. The polypeptide is Small ribosomal subunit biogenesis GTPase RsgA (Shouchella clausii (strain KSM-K16) (Alkalihalobacillus clausii)).